The sequence spans 215 residues: Kinetochore protein Spc25 (215 aa).

Positions 43–114 (DNLLTAMEKA…MECIHALKRA (72 aa)) form a coiled coil.

Belongs to the SPC25 family. Component of the Ndc80 complex, which is composed of Ndc80, Nuf2 and Spc25.

The protein localises to the nucleus. The protein resides in the chromosome. It is found in the centromere. Its subcellular location is the kinetochore. Acts as a component of the essential kinetochore-associated Ndc80 complex, which is required for chromosome segregation and spindle checkpoint activity during meiosis and mitosis. Required for kinetochore integrity and the organization of stable microtubule binding sites in the outer plate of the kinetochore. Participates in SAC signaling that responds specifically to disruptions in spindle microtubule dynamics. The NDC80 complex synergistically enhances the affinity of the SKA1 complex for microtubules and may allow the NDC80 complex to track depolymerizing microtubules. In Drosophila ananassae (Fruit fly), this protein is Kinetochore protein Spc25.